Consider the following 142-residue polypeptide: Snaclec GPIB-binding protein subunit alpha (142 aa).

Intrachain disulfides connect Cys-6–Cys-17, Cys-39–Cys-136, and Cys-111–Cys-128. One can recognise a C-type lectin domain in the interval 13 to 137 (HRQYCYKFFQ…CVEGNPFVCK (125 aa)).

This sequence belongs to the snaclec family. As to quaternary structure, heterodimer of subunits alpha and beta; disulfide-linked. As to expression, expressed by the venom gland.

The protein resides in the secreted. Functionally, binds to platelet GPIb (subunit alpha) (GP1BA) and functions as a receptor blocker for vWF binding to GPIb. The platelet GPIb-binding site resides on the GPIB-BP subunit beta and not on the alpha subunit. At a final concentration of 104 nM totally abolishes vWF-dependent shear-induced platelet aggregation (SIPA) at a high shear stress, but had no effect on SIPA at a low shear stress. This chain is Snaclec GPIB-binding protein subunit alpha, found in Bothrops jararaca (Jararaca).